Reading from the N-terminus, the 137-residue chain is Holo-[acyl-carrier-protein] synthase (137 aa).

Mg(2+) is bound by residues aspartate 8 and glutamate 57.

The protein belongs to the P-Pant transferase superfamily. AcpS family. The cofactor is Mg(2+).

It localises to the cytoplasm. The catalysed reaction is apo-[ACP] + CoA = holo-[ACP] + adenosine 3',5'-bisphosphate + H(+). In terms of biological role, transfers the 4'-phosphopantetheine moiety from coenzyme A to a Ser of acyl-carrier-protein. This chain is Holo-[acyl-carrier-protein] synthase, found in Cereibacter sphaeroides (strain ATCC 17025 / ATH 2.4.3) (Rhodobacter sphaeroides).